Here is a 242-residue protein sequence, read N- to C-terminus: Probable transcriptional regulatory protein Bxeno_A1185 (242 aa).

The protein belongs to the TACO1 family.

It localises to the cytoplasm. This chain is Probable transcriptional regulatory protein Bxeno_A1185, found in Paraburkholderia xenovorans (strain LB400).